Consider the following 123-residue polypeptide: Protein Wnt-7 (123 aa).

Residue S1 is the site of O-palmitoleoyl serine; by PORCN attachment. 2 N-linked (GlcNAc...) asparagine glycosylation sites follow: N79 and N90. Residues C89 and C104 are joined by a disulfide bond.

The protein belongs to the Wnt family. Palmitoleoylation is required for efficient binding to frizzled receptors. Depalmitoleoylation leads to Wnt signaling pathway inhibition.

The protein localises to the secreted. It localises to the extracellular space. It is found in the extracellular matrix. In terms of biological role, ligand for members of the frizzled family of seven transmembrane receptors. Probable developmental protein. May be a signaling molecule which affects the development of discrete regions of tissues. Is likely to signal over only few cell diameters. This chain is Protein Wnt-7 (WNT-7), found in Strongylocentrotus purpuratus (Purple sea urchin).